A 70-amino-acid chain; its full sequence is MPGIKVKESESFEEAYRKFKKQTDRNLVVTEVRARRFFESKTEKRKKQKINAKKKMLKRLYMLRRYESKL.

It belongs to the bacterial ribosomal protein bS21 family.

In Helicobacter hepaticus (strain ATCC 51449 / 3B1), this protein is Small ribosomal subunit protein bS21.